Reading from the N-terminus, the 201-residue chain is Recombination protein RecR (201 aa).

The C4-type zinc-finger motif lies at 60-75 (CSRCGNVDTVDPCTVC). The 96-residue stretch at 83-178 (SVIIVVEDVA…KITRLAHGVP (96 aa)) folds into the Toprim domain.

Belongs to the RecR family.

Its function is as follows. May play a role in DNA repair. It seems to be involved in an RecBC-independent recombinational process of DNA repair. It may act with RecF and RecO. In Rhizobium rhizogenes (strain K84 / ATCC BAA-868) (Agrobacterium radiobacter), this protein is Recombination protein RecR.